A 187-amino-acid polypeptide reads, in one-letter code: ECF RNA polymerase sigma factor SigW (187 aa).

Residues 3 to 95 (MMIKKRIKQV…RKKKPDYYLD (93 aa)) are sigma-70 factor domain-2. A Polymerase core binding motif is present at residues 47 to 50 (DIAQ). The tract at residues 125-187 (ELSNTIQQKI…EALRKQLRDL (63 aa)) is sigma-70 factor domain-4. The H-T-H motif DNA-binding region spans 166 to 184 (VGTVKTRIHRGREALRKQL).

It belongs to the sigma-70 factor family. ECF subfamily. As to quaternary structure, interacts transiently with the RNA polymerase catalytic core formed by RpoA, RpoB, RpoC and RpoZ (2 alpha, 1 beta, 1 beta' and 1 omega subunit) to form the RNA polymerase holoenzyme that can initiate transcription. Forms a heterodimer with cognate anti-sigma factor RsiW, which prevents it from binding to the -10 and -35 promoter elements.

Extracytoplasmic function (ECF) sigma factors are held in an inactive form by a cognate anti-sigma factor (RsiW for this protein) until released by regulated membrane proteolysis (RIP). RIP occurs when an extracytoplasmic signal (envelope stress) triggers a concerted proteolytic cascade to transmit information and elicit cellular responses. The anti-sigma factor RsiW is a membrane protein, binding sigma-W in the cytoplasm. RsiW is first cut extracytoplasmically (site-1 protease, S1P, by PrsW), then within the membrane itself (site-2 protease, S2P, by RasP), while cytoplasmic proteases (predominantly ClpX-ClpP) finish degrading the regulatory protein, liberating sigma-W. Its function is as follows. Sigma factors are initiation factors that promote the attachment of RNA polymerase (RNAP) to specific initiation sites and are then released. Sigma-W controls genes involved in response to cell envelope stress such as antimicrobial peptides, alkaline pH, transport processes and detoxification. The chain is ECF RNA polymerase sigma factor SigW (sigW) from Bacillus subtilis (strain 168).